The primary structure comprises 667 residues: Probable endo-1,3(4)-beta-glucanase AFLA_105200 (667 aa).

The N-terminal stretch at 1-24 is a signal peptide; the sequence is MSSSSFVWTVGSIALSSLITPTIA. A GH16 domain is found at 25-288; that stretch reads DGSGSRYQLT…WAGGVFGDSG (264 aa). A glycan (N-linked (GlcNAc...) asparagine) is linked at asparagine 63. Catalysis depends on glutamate 144, which acts as the Nucleophile. The Proton donor role is filled by glutamate 149. Composition is skewed to polar residues over residues 354-363 and 379-394; these read VPSVTSTPIL and ATSS…QTSV. 2 disordered regions span residues 354–427 and 448–646; these read VPSV…ADAV and GTIQ…AGAS. 3 stretches are compositionally biased toward low complexity: residues 395 to 427, 448 to 483, and 574 to 622; these read AGAE…ADAV, GTIQ…SQEP, and APTS…EATA. Residues 623–637 show a composition bias toward polar residues; it reads PTETDSGASTGTNPE. A lipid anchor (GPI-anchor amidated glycine) is attached at glycine 644. A propeptide spans 645-667 (removed in mature form); sequence ASKSVGISGLAGIVCGIAMAMLA.

This sequence belongs to the glycosyl hydrolase 16 family.

It localises to the cell membrane. It catalyses the reaction Endohydrolysis of (1-&gt;3)- or (1-&gt;4)-linkages in beta-D-glucans when the glucose residue whose reducing group is involved in the linkage to be hydrolyzed is itself substituted at C-3.. Functionally, mixed-linked glucanase involved in the degradation of complex natural cellulosic substrates. The sequence is that of Probable endo-1,3(4)-beta-glucanase AFLA_105200 from Aspergillus flavus (strain ATCC 200026 / FGSC A1120 / IAM 13836 / NRRL 3357 / JCM 12722 / SRRC 167).